The primary structure comprises 448 residues: Serine--tRNA ligase (448 aa).

L-serine is bound at residue 255-257 (TSE). 286–288 (RSE) is a binding site for ATP. E309 provides a ligand contact to L-serine. ATP is bound at residue 373–376 (EISS). Residue S408 coordinates L-serine.

It belongs to the class-II aminoacyl-tRNA synthetase family. Type-1 seryl-tRNA synthetase subfamily. In terms of assembly, homodimer. The tRNA molecule binds across the dimer.

The protein localises to the cytoplasm. The catalysed reaction is tRNA(Ser) + L-serine + ATP = L-seryl-tRNA(Ser) + AMP + diphosphate + H(+). The enzyme catalyses tRNA(Sec) + L-serine + ATP = L-seryl-tRNA(Sec) + AMP + diphosphate + H(+). The protein operates within aminoacyl-tRNA biosynthesis; selenocysteinyl-tRNA(Sec) biosynthesis; L-seryl-tRNA(Sec) from L-serine and tRNA(Sec): step 1/1. In terms of biological role, catalyzes the attachment of serine to tRNA(Ser). Is also able to aminoacylate tRNA(Sec) with serine, to form the misacylated tRNA L-seryl-tRNA(Sec), which will be further converted into selenocysteinyl-tRNA(Sec). This chain is Serine--tRNA ligase, found in Bordetella petrii (strain ATCC BAA-461 / DSM 12804 / CCUG 43448).